A 126-amino-acid polypeptide reads, in one-letter code: MAFYEHVVIARQDISPQQAEALNEQLKALIEENGGHIAKIEYWGLRNLTYRIKKNRKGHYSLLAIDAPAPAVKEMERQLLINEDVLRFMTIRVEELDLELSPVLARRDRGDRPERPREDFGAQAQA.

The tract at residues 104–126 (LARRDRGDRPERPREDFGAQAQA) is disordered. The segment covering 105–120 (ARRDRGDRPERPREDF) has biased composition (basic and acidic residues).

It belongs to the bacterial ribosomal protein bS6 family.

In terms of biological role, binds together with bS18 to 16S ribosomal RNA. This Caulobacter vibrioides (strain ATCC 19089 / CIP 103742 / CB 15) (Caulobacter crescentus) protein is Small ribosomal subunit protein bS6.